We begin with the raw amino-acid sequence, 249 residues long: Triosephosphate isomerase (249 aa).

9–11 (NWK) serves as a coordination point for substrate. The active-site Electrophile is the His95. The Proton acceptor role is filled by Glu166. Substrate contacts are provided by residues Gly172, Ser211, and 232-233 (GG).

This sequence belongs to the triosephosphate isomerase family. Homodimer.

Its subcellular location is the cytoplasm. The enzyme catalyses D-glyceraldehyde 3-phosphate = dihydroxyacetone phosphate. The protein operates within carbohydrate biosynthesis; gluconeogenesis. It participates in carbohydrate degradation; glycolysis; D-glyceraldehyde 3-phosphate from glycerone phosphate: step 1/1. Functionally, involved in the gluconeogenesis. Catalyzes stereospecifically the conversion of dihydroxyacetone phosphate (DHAP) to D-glyceraldehyde-3-phosphate (G3P). In Legionella pneumophila (strain Lens), this protein is Triosephosphate isomerase.